The sequence spans 284 residues: Bifunctional protein FolD (284 aa).

NADP(+) contacts are provided by residues glycine 165–serine 167 and serine 190.

This sequence belongs to the tetrahydrofolate dehydrogenase/cyclohydrolase family. Homodimer.

It catalyses the reaction (6R)-5,10-methylene-5,6,7,8-tetrahydrofolate + NADP(+) = (6R)-5,10-methenyltetrahydrofolate + NADPH. The catalysed reaction is (6R)-5,10-methenyltetrahydrofolate + H2O = (6R)-10-formyltetrahydrofolate + H(+). It participates in one-carbon metabolism; tetrahydrofolate interconversion. Catalyzes the oxidation of 5,10-methylenetetrahydrofolate to 5,10-methenyltetrahydrofolate and then the hydrolysis of 5,10-methenyltetrahydrofolate to 10-formyltetrahydrofolate. The sequence is that of Bifunctional protein FolD from Streptococcus equi subsp. equi (strain 4047).